Reading from the N-terminus, the 315-residue chain is MEQWPLLFVVALCILQSSSKPMEKKDRVHHDAPLSNKDHDDEENFDYDHEAFLGQEEAKTFDQLTPEESKERLGKIVEKIDEDHDGFVTADEMKRWIKHAQRRWIYEDVDRQWQAHDLNSDSFVSWEEYKDATYGYILDEADPEDGFNYRQMMTRDERRFKMADQDGDLRANKEEFTAFLHPEEFDYMKDIVVLETMEDIDKNGDGLIDLNEYIGDMYSQNGDSSEPEWVKTEREQFTEFRDKNKDGRMDKDETRDWILPADYDHAEAEAKHLLYESDADKDGRLTKQEIVDKYDLFVGSQATDFGDALVRHDEF.

A signal peptide spans 1–19 (MEQWPLLFVVALCILQSSS). Residues 22–39 (MEKKDRVHHDAPLSNKDH) are compositionally biased toward basic and acidic residues. The tract at residues 22 to 42 (MEKKDRVHHDAPLSNKDHDDE) is disordered. EF-hand domains follow at residues 68–103 (ESKE…AQRR), 104–139 (WIYE…YILD), 151–186 (QMMT…EEFD), 188–223 (MKDI…QNGD), 229–264 (WVKT…ADYD), and 265–300 (HAEA…FVGS). Ca(2+)-binding residues include D81, D83, D85, E92, D117, N119, D121, E128, D164, D166, D168, R170, E175, D201, N203, D205, E212, D242, N244, D246, R248, E253, D278, D280, D282, R284, and E289. The Prevents secretion from ER signature appears at 312–315 (HDEF).

The protein belongs to the CREC family. In terms of assembly, interacts with ggcx.

It localises to the endoplasmic reticulum membrane. The protein localises to the golgi apparatus. It is found in the secreted. The protein resides in the melanosome. Its subcellular location is the sarcoplasmic reticulum lumen. Its function is as follows. Involved in regulation of vitamin K-dependent carboxylation of multiple N-terminal glutamate residues. Seems to inhibit gamma-carboxylase ggcx. Binds 7 calcium ions with a low affinity. The chain is Calumenin-B (calub) from Danio rerio (Zebrafish).